The following is a 389-amino-acid chain: Acetylornithine aminotransferase (389 aa).

Pyridoxal 5'-phosphate is bound by residues 104 to 105 and F131; that span reads GT. Position 134 (R134) interacts with N(2)-acetyl-L-ornithine. 216-219 contacts pyridoxal 5'-phosphate; the sequence is DEVQ. Position 245 is an N6-(pyridoxal phosphate)lysine (K245). A N(2)-acetyl-L-ornithine-binding site is contributed by S273. T274 serves as a coordination point for pyridoxal 5'-phosphate.

It belongs to the class-III pyridoxal-phosphate-dependent aminotransferase family. ArgD subfamily. As to quaternary structure, homodimer. Pyridoxal 5'-phosphate is required as a cofactor.

It is found in the cytoplasm. It carries out the reaction N(2)-acetyl-L-ornithine + 2-oxoglutarate = N-acetyl-L-glutamate 5-semialdehyde + L-glutamate. It functions in the pathway amino-acid biosynthesis; L-arginine biosynthesis; N(2)-acetyl-L-ornithine from L-glutamate: step 4/4. This Methanopyrus kandleri (strain AV19 / DSM 6324 / JCM 9639 / NBRC 100938) protein is Acetylornithine aminotransferase.